The following is a 474-amino-acid chain: Bifunctional protein HldE (474 aa).

Positions 1–318 (MKLSMPRFDQ…RAIQREEGSE (318 aa)) are ribokinase. Residue 194–197 (NLSE) participates in ATP binding. The active site involves D263. Residues 343–474 (FTNGCFDILH…AIVEKIRGQG (132 aa)) are cytidylyltransferase.

In the N-terminal section; belongs to the carbohydrate kinase PfkB family. This sequence in the C-terminal section; belongs to the cytidylyltransferase family. In terms of assembly, homodimer.

The enzyme catalyses D-glycero-beta-D-manno-heptose 7-phosphate + ATP = D-glycero-beta-D-manno-heptose 1,7-bisphosphate + ADP + H(+). It catalyses the reaction D-glycero-beta-D-manno-heptose 1-phosphate + ATP + H(+) = ADP-D-glycero-beta-D-manno-heptose + diphosphate. Its pathway is nucleotide-sugar biosynthesis; ADP-L-glycero-beta-D-manno-heptose biosynthesis; ADP-L-glycero-beta-D-manno-heptose from D-glycero-beta-D-manno-heptose 7-phosphate: step 1/4. It participates in nucleotide-sugar biosynthesis; ADP-L-glycero-beta-D-manno-heptose biosynthesis; ADP-L-glycero-beta-D-manno-heptose from D-glycero-beta-D-manno-heptose 7-phosphate: step 3/4. Functionally, catalyzes the phosphorylation of D-glycero-D-manno-heptose 7-phosphate at the C-1 position to selectively form D-glycero-beta-D-manno-heptose-1,7-bisphosphate. Catalyzes the ADP transfer from ATP to D-glycero-beta-D-manno-heptose 1-phosphate, yielding ADP-D-glycero-beta-D-manno-heptose. This chain is Bifunctional protein HldE, found in Pseudomonas syringae pv. tomato (strain ATCC BAA-871 / DC3000).